We begin with the raw amino-acid sequence, 240 residues long: MLALLCSCLLLAAGASDAWTGEDSAEPNSDSAEWIRDMYAKVTEIWQEVMQRRDDDGALHAACQVQPSATLDAAQPRVTGVVLFRQLAPRAKLDAFFALEGFPTEPNSSSRAIHVHQFGDLSQGCESTGPHYNPLAVPHPQHPGDFGNFAVRDGSLWRYRAGLAASLAGPHSIVGRAVVVHAGEDDLGRGGNQASVENGNAGRRLACCVVGVCGPGLWERQAREHSERKKRRRESECKAA.

The signal sequence occupies residues 1–18 (MLALLCSCLLLAAGASDA). 2 disulfide bridges follow: cysteine 63–cysteine 208 and cysteine 125–cysteine 207. A glycan (N-linked (GlcNAc...) asparagine) is linked at asparagine 107. 3 residues coordinate Cu cation: histidine 114, histidine 116, and histidine 131. Zn(2+) contacts are provided by histidine 131, histidine 139, histidine 142, and aspartate 145. Cu cation is bound at residue histidine 181. 2 N-linked (Glc) (glycation) lysine; in vitro glycosylation sites follow: lysine 229 and lysine 230.

The protein belongs to the Cu-Zn superoxide dismutase family. As to quaternary structure, homotetramer. Directly interacts with ATP7A; this interaction is copper-dependent and is required for SOD3 activity. The cofactor is Cu cation. Zn(2+) serves as cofactor. As to expression, expressed in blood vessels, heart, lung, kidney and placenta. Major SOD isoenzyme in extracellular fluids such as plasma, lymph and synovial fluid.

It localises to the secreted. The protein resides in the extracellular space. The protein localises to the golgi apparatus. It is found in the trans-Golgi network. The enzyme catalyses 2 superoxide + 2 H(+) = H2O2 + O2. In terms of biological role, protect the extracellular space from toxic effect of reactive oxygen intermediates by converting superoxide radicals into hydrogen peroxide and oxygen. The protein is Extracellular superoxide dismutase [Cu-Zn] (SOD3) of Homo sapiens (Human).